A 560-amino-acid chain; its full sequence is NADH-quinone oxidoreductase subunit C/D (560 aa).

Positions 2–157 (NKLENLKQLL…NNQQACTNSL (156 aa)) are NADH dehydrogenase I subunit C. The tract at residues 175-560 (KYLPLNIGPS…MNLIAGELDR (386 aa)) is NADH dehydrogenase I subunit D.

In the N-terminal section; belongs to the complex I 30 kDa subunit family. This sequence in the C-terminal section; belongs to the complex I 49 kDa subunit family. In terms of assembly, NDH-1 is composed of 13 different subunits. Subunits NuoB, CD, E, F, and G constitute the peripheral sector of the complex.

The protein localises to the cytoplasm. It is found in the cell inner membrane. It catalyses the reaction a quinone + NADH + 5 H(+)(in) = a quinol + NAD(+) + 4 H(+)(out). NDH-1 shuttles electrons from NADH, via FMN and iron-sulfur (Fe-S) centers, to quinones in the respiratory chain. The immediate electron acceptor for the enzyme in this species is believed to be ubiquinone. Couples the redox reaction to proton translocation (for every two electrons transferred, four hydrogen ions are translocated across the cytoplasmic membrane), and thus conserves the redox energy in a proton gradient. This is NADH-quinone oxidoreductase subunit C/D from Bdellovibrio bacteriovorus (strain ATCC 15356 / DSM 50701 / NCIMB 9529 / HD100).